A 1023-amino-acid polypeptide reads, in one-letter code: Probable histidine kinase 3 (1023 aa).

Residues M1–W80 are Cytoplasmic-facing. A helical transmembrane segment spans residues W81–F101. Residues M102–P387 lie on the Extracellular side of the membrane. The CHASE domain occupies T151 to G352. A helical transmembrane segment spans residues W388–F408. Topologically, residues Q409–E1023 are cytoplasmic. The 271-residue stretch at T445–R715 folds into the Histidine kinase domain. H448 is subject to Phosphohistidine; by autocatalysis. Response regulatory domains lie at N732–L854 and Q880–F1016. D783 carries the post-translational modification 4-aspartylphosphate. The disordered stretch occupies residues L812–E831. The span at S817–D827 shows a compositional bias: polar residues. Position 930 is a 4-aspartylphosphate (D930).

Post-translationally, activation probably requires a transfer of a phosphate group between a His in the transmitter domain and an Asp of the receiver domain.

The protein localises to the cell membrane. The enzyme catalyses ATP + protein L-histidine = ADP + protein N-phospho-L-histidine.. Its function is as follows. Cytokinin receptor related to bacterial two-component regulators. Functions as a histidine kinase and transmits the stress signal to a downstream MAPK cascade. In Oryza sativa subsp. indica (Rice), this protein is Probable histidine kinase 3.